The following is a 229-amino-acid chain: Large ribosomal subunit protein uL1 (229 aa).

Belongs to the universal ribosomal protein uL1 family. As to quaternary structure, part of the 50S ribosomal subunit.

Functionally, binds directly to 23S rRNA. The L1 stalk is quite mobile in the ribosome, and is involved in E site tRNA release. Protein L1 is also a translational repressor protein, it controls the translation of the L11 operon by binding to its mRNA. In Staphylococcus aureus (strain MRSA252), this protein is Large ribosomal subunit protein uL1.